The sequence spans 86 residues: Large ribosomal subunit protein uL23 (86 aa).

Belongs to the universal ribosomal protein uL23 family. As to quaternary structure, part of the 50S ribosomal subunit. Contacts protein L29.

Functionally, binds to 23S rRNA. One of the proteins that surrounds the polypeptide exit tunnel on the outside of the ribosome. The chain is Large ribosomal subunit protein uL23 from Thermococcus gammatolerans (strain DSM 15229 / JCM 11827 / EJ3).